An 815-amino-acid polypeptide reads, in one-letter code: Protein-glutamine gamma-glutamyltransferase K (815 aa).

Disordered regions lie at residues M1–G40 and D59–D100. Residues W16 to E25 show a composition bias toward pro residues. T21 bears the Phosphothreonine mark. Residues S23, S80, S83, S90, and S93 each carry the phosphoserine modification. Positions D59–R87 are enriched in basic and acidic residues. Active-site residues include C375, H434, and D457. Ca(2+)-binding residues include N497, D499, E546, and E551. The tract at residues S795–A815 is disordered.

This sequence belongs to the transglutaminase superfamily. Transglutaminase family. In terms of assembly, interacts with PLAAT4. The cofactor is Ca(2+). Post-translationally, palmitoylated. In terms of processing, the membrane anchorage region possesses a cluster of five cysteines within which fatty acid(s) may become thioester-linked. It is subject to phorbol ester-stimulated phosphorylation and is hypersensitive to proteolysis, which releases the enzyme in a soluble form. Tyrosine-phosphorylated.

It is found in the membrane. It carries out the reaction L-glutaminyl-[protein] + L-lysyl-[protein] = [protein]-L-lysyl-N(6)-5-L-glutamyl-[protein] + NH4(+). In terms of biological role, catalyzes the cross-linking of proteins and the conjugation of polyamines to proteins. Responsible for cross-linking epidermal proteins during formation of the stratum corneum. Involved in cell proliferation. The polypeptide is Protein-glutamine gamma-glutamyltransferase K (TGM1) (Canis lupus familiaris (Dog)).